A 206-amino-acid polypeptide reads, in one-letter code: MNAVPDGRSDKPRSVVGVLALQGDTREHLAALTEAGAEAVTVRRLRELEAVDALVIPGGESTAMSHLLREFELLEPLRARLAEGMPAYGSCAGMILLATEILDAGAAGREATPLKGIDMSVRRNAFGRQVDSFEGDIPFVGLDSSVHAVFIRAPWVERIGDGVEVLARADGHIVAVRQGRMLATAFHPEVTGDRRVHKLFVDMVSE.

59–61 (GES) contributes to the L-glutamine binding site. Catalysis depends on Cys91, which acts as the Nucleophile. L-glutamine is bound by residues Arg123 and 151–152 (IR). Active-site charge relay system residues include His187 and Glu189.

It belongs to the glutaminase PdxT/SNO family. In terms of assembly, in the presence of PdxS, forms a dodecamer of heterodimers. Only shows activity in the heterodimer.

It catalyses the reaction aldehydo-D-ribose 5-phosphate + D-glyceraldehyde 3-phosphate + L-glutamine = pyridoxal 5'-phosphate + L-glutamate + phosphate + 3 H2O + H(+). It carries out the reaction L-glutamine + H2O = L-glutamate + NH4(+). It functions in the pathway cofactor biosynthesis; pyridoxal 5'-phosphate biosynthesis. Its function is as follows. Catalyzes the hydrolysis of glutamine to glutamate and ammonia as part of the biosynthesis of pyridoxal 5'-phosphate. The resulting ammonia molecule is channeled to the active site of PdxS. This Mycobacterium sp. (strain JLS) protein is Pyridoxal 5'-phosphate synthase subunit PdxT.